Reading from the N-terminus, the 593-residue chain is Mitoguardin 2 (593 aa).

2 helical membrane passes run 11–31 (MIQA…TTFG) and 42–62 (PGLR…ALAA). Disordered regions lie at residues 103 to 141 (GYSS…VASM) and 196 to 231 (SVGQ…SQRK). Composition is skewed to low complexity over residues 106 to 116 (SRRVQSPSSKS) and 123 to 141 (ISSI…VASM). Position 132 is a phosphoserine (Ser-132). The residue at position 206 (Thr-206) is a Phosphothreonine. Ser-220, Ser-224, and Ser-228 each carry phosphoserine. Thr-273 carries the post-translational modification Phosphothreonine. Phosphoserine occurs at positions 276 and 295. The FFAT signature appears at 292–298 (SFFSATE).

This sequence belongs to the mitoguardin family. In terms of assembly, homodimer and heterodimer; forms heterodimers with MIGA1. Interacts with PLD6/MitoPLD. Interacts (via phosphorylated FFAT motif) with MOSPD2, VAPA and VAPB. Phosphorylation at Ser-295 of the FFAT motif activates interaction with MOSPD2, VAPA and VAPB.

The protein resides in the mitochondrion outer membrane. Regulator of mitochondrial fusion: acts by forming homo- and heterodimers at the mitochondrial outer membrane and facilitating the formation of PLD6/MitoPLD dimers. May act by regulating phospholipid metabolism via PLD6/MitoPLD. The polypeptide is Mitoguardin 2 (Homo sapiens (Human)).